A 411-amino-acid polypeptide reads, in one-letter code: Glutamate dehydrogenase 3, mitochondrial (411 aa).

The transit peptide at 1-18 directs the protein to the mitochondrion; that stretch reads MNALAATSRNFRQAARLL. Residue lysine 102 is part of the active site.

Belongs to the Glu/Leu/Phe/Val dehydrogenases family. As to expression, barely expressed in leaves, spikelets and roots. Glumes and stamens specific accumulation.

It is found in the mitochondrion. The enzyme catalyses L-glutamate + NAD(+) + H2O = 2-oxoglutarate + NH4(+) + NADH + H(+). The catalysed reaction is L-glutamate + NADP(+) + H2O = 2-oxoglutarate + NH4(+) + NADPH + H(+). The sequence is that of Glutamate dehydrogenase 3, mitochondrial (GDH3) from Oryza sativa subsp. japonica (Rice).